Consider the following 385-residue polypeptide: 1-deoxy-D-xylulose 5-phosphate reductoisomerase (385 aa).

Residues T10, G11, I13, G36, and N38 each contribute to the NADPH site. K123 is a binding site for 1-deoxy-D-xylulose 5-phosphate. Residue E124 participates in NADPH binding. Residue D148 participates in Mn(2+) binding. Residues S149, E150, S172, and H195 each contribute to the 1-deoxy-D-xylulose 5-phosphate site. Residue E150 coordinates Mn(2+). G201 lines the NADPH pocket. 1-deoxy-D-xylulose 5-phosphate-binding residues include S208, N213, K214, and E217. Mn(2+) is bound at residue E217.

This sequence belongs to the DXR family. Requires Mg(2+) as cofactor. Mn(2+) is required as a cofactor.

The catalysed reaction is 2-C-methyl-D-erythritol 4-phosphate + NADP(+) = 1-deoxy-D-xylulose 5-phosphate + NADPH + H(+). It participates in isoprenoid biosynthesis; isopentenyl diphosphate biosynthesis via DXP pathway; isopentenyl diphosphate from 1-deoxy-D-xylulose 5-phosphate: step 1/6. In terms of biological role, catalyzes the NADPH-dependent rearrangement and reduction of 1-deoxy-D-xylulose-5-phosphate (DXP) to 2-C-methyl-D-erythritol 4-phosphate (MEP). The chain is 1-deoxy-D-xylulose 5-phosphate reductoisomerase from Anaplasma phagocytophilum (strain HZ).